Reading from the N-terminus, the 1046-residue chain is Protein jim lovell (1046 aa).

The tract at residues 54-109 is disordered; the sequence is TSDHAPMHSTPPTTPPTPPPLPLNMSQSASAVTEAATPENSLPATPPSEGALAVPS. A compositionally biased stretch (pro residues) spans 65–75; it reads PTTPPTPPPLP. The BTB domain occupies 140 to 205; the sequence is VDVTLVCAET…MYRGEISVPQ (66 aa). Disordered regions lie at residues 290-342, 355-501, 632-655, 686-719, 758-791, 851-947, and 998-1046; these read LRRK…DAES, AERD…KLQD, PPFGGHNGGHPGNSGPGNGCPGQA, EFGPASPMSLQGPFNAPDGPPHPPSPLPFPGMSS, RDMPGGPPPFLKKKMPRPKGQHSAPRGGPPRSWT, EMLQ…APNA, and DCKS…TGHD. Residues 294–303 show a composition bias toward basic and acidic residues; it reads REQESDRDLE. The span at 315-324 shows a compositional bias: basic residues; the sequence is PRRKQARPRR. The span at 365–380 shows a compositional bias: polar residues; sequence QDNSQGEAEKISSSPA. Residues 383–412 show a composition bias toward basic and acidic residues; the sequence is LVERAKEQKSMKEEGSDQPRSLNENHHQLE. Residues 413–432 show a composition bias toward acidic residues; sequence LDDEDDDDQDHEEEEEQDIE. Residues 433-443 show a composition bias toward basic and acidic residues; it reads ELIHTTNELRR. Low complexity predominate over residues 445–454; the sequence is AAAAAANAAA. Residues 636 to 651 are compositionally biased toward gly residues; the sequence is GHNGGHPGNSGPGNGC. The segment covering 703–714 has biased composition (pro residues); that stretch reads DGPPHPPSPLPF. The span at 768-777 shows a compositional bias: basic residues; that stretch reads LKKKMPRPKG. The HTH psq-type domain maps to 781–833; that stretch reads APRGGPPRSWTNTELTEALQHVWNKKMTTSQASRIFGIPYNSLLMYVRGKYGK. Positions 866–881 are enriched in basic and acidic residues; it reads KNEKSKERKEKEKDKN. 2 stretches are compositionally biased toward low complexity: residues 882–897 and 912–925; these read SMSSNGSGGSANSQGG and LGPMGQLDLDLGLP.

In terms of tissue distribution, initially expressed at blastoderm stage, transient accumulation at dorso-lateral positions of the embryo and differences along the longitudinal axis. At later stages of embryogenesis, expression is found exclusively in neural anlagen. Expressed in 4 posterior-most ventral unpaired median interneurons (VUM) neurons, VUM interneurons and one progeny of the median neuroblast (MNB).

The protein resides in the nucleus. Has a regulatory role during midline cell development. The polypeptide is Protein jim lovell (lov) (Drosophila melanogaster (Fruit fly)).